We begin with the raw amino-acid sequence, 465 residues long: Protein hedgehog (465 aa).

Cys79 carries the N-palmitoyl cysteine lipid modification. Positions 143, 144, 149, 179, 180, 183, and 185 each coordinate Ca(2+). Gly251 carries Cholesterol glycine ester lipidation.

This sequence belongs to the hedgehog family. As to quaternary structure, interacts with shf. The C-terminal part of the hedgehog protein precursor displays an autoproteolysis activity that results in the cleavage of the full-length protein into two parts (N-product and C-product). In addition, the C-terminal part displays a cholesterol transferase activity that results by the covalent attachment of a cholesterol moiety to the C-terminal of the newly generated N-product. The N-product is the active species in both local and long-range signaling, whereas the C-product has no signaling activity. In terms of processing, cholesterylation is required for N-product targeting to lipid rafts and multimerization. Post-translationally, N-palmitoylation by Rasp of the hedgehog N-product, within the secretory pathway, is required for the embryonic and larval patterning activities of the hedgehog signal.

The protein resides in the nucleus. It localises to the cytoplasm. It is found in the cell membrane. It carries out the reaction glycyl-L-cysteinyl-[protein] + cholesterol + H(+) = [protein]-C-terminal glycyl cholesterol ester + N-terminal L-cysteinyl-[protein]. The C-terminal part of the hedgehog protein precursor displays an autoproteolysis activity that results in the cleavage of the full-length protein into two parts (N-product and C-product). In addition, the C-terminal part displays a cholesterol transferase activity that results by the covalent attachment of a cholesterol moiety to the C-terminal of the newly generated N-product. Once cleaved, the C-product has no signaling activity and diffuses from the cell. Functionally, the dually lipidated hedgehog protein N-product is a morphogen which is essential for a variety of patterning events during development. Establishes the anterior-posterior axis of the embryonic segments and patterns the larval imaginal disks. Binds to the patched (ptc) receptor, which functions in association with smoothened (smo), to activate the transcription of target genes wingless (wg), decapentaplegic (dpp) and ptc. In the absence of hh, ptc represses the constitutive signaling activity of smo through fused (fu). Essential component of a signaling pathway which regulates the Duox-dependent gut immune response to bacterial uracil; required to activate Cad99C-dependent endosome formation, norpA-dependent Ca2+ mobilization and p38 MAPK, which are essential steps in the Duox-dependent production of reactive oxygen species (ROS) in response to intestinal bacterial infection. During photoreceptor differentiation, it up-regulates transcription of Ubr3, which in turn promotes the hh-signaling pathway by mediating the ubiquitination and degradation of cos. This is Protein hedgehog from Drosophila sechellia (Fruit fly).